Here is a 364-residue protein sequence, read N- to C-terminus: Probable dual-specificity RNA methyltransferase RlmN (364 aa).

The Proton acceptor role is filled by Glu-107. Residues His-113–Asp-346 enclose the Radical SAM core domain. A disulfide bond links Cys-120 and Cys-351. [4Fe-4S] cluster-binding residues include Cys-127, Cys-131, and Cys-134. S-adenosyl-L-methionine contacts are provided by residues Gly-177–Glu-178, Ser-209, Ser-232–His-234, and Asn-308. The active-site S-methylcysteine intermediate is Cys-351.

It belongs to the radical SAM superfamily. RlmN family. It depends on [4Fe-4S] cluster as a cofactor.

Its subcellular location is the cytoplasm. The enzyme catalyses adenosine(2503) in 23S rRNA + 2 reduced [2Fe-2S]-[ferredoxin] + 2 S-adenosyl-L-methionine = 2-methyladenosine(2503) in 23S rRNA + 5'-deoxyadenosine + L-methionine + 2 oxidized [2Fe-2S]-[ferredoxin] + S-adenosyl-L-homocysteine. It carries out the reaction adenosine(37) in tRNA + 2 reduced [2Fe-2S]-[ferredoxin] + 2 S-adenosyl-L-methionine = 2-methyladenosine(37) in tRNA + 5'-deoxyadenosine + L-methionine + 2 oxidized [2Fe-2S]-[ferredoxin] + S-adenosyl-L-homocysteine. Its function is as follows. Specifically methylates position 2 of adenine 2503 in 23S rRNA and position 2 of adenine 37 in tRNAs. Confers resistance to some classes of antibiotics. The protein is Probable dual-specificity RNA methyltransferase RlmN of Staphylococcus carnosus (strain TM300).